Here is a 187-residue protein sequence, read N- to C-terminus: Tetraheme c-type cytochrome CymA (187 aa).

Topologically, residues 1-12 (MNWRALFKPSAK) are cytoplasmic. A helical membrane pass occupies residues 13–33 (YSILALLVVGIVIGVVGYFAT). The Periplasmic portion of the chain corresponds to 34 to 187 (QQTLHATSTD…KGVAHPYPKG (154 aa)). Heme c is bound by residues Cys46, Cys49, His64, Cys75, Cys78, His79, Asp97, Cys136, Cys139, His140, Cys173, Cys176, His177, and His182.

This sequence belongs to the NapC/NirT/NrfH family. In terms of assembly, homodimer. The cofactor is heme c.

The protein localises to the cell inner membrane. The enzyme catalyses a quinol + 2 Fe(III)-[cytochrome c](out) = a quinone + 2 Fe(II)-[cytochrome c](out) + 2 H(+)(out). Spectroscopic studies suggest that CymA requires a non-heme cofactor for quinol oxidation. In terms of biological role, quinol dehydrogenase involved in several anaerobic electron transfer pathways. Acquires electrons from the membrane quinone pool and mediates their transfer to several periplasmic terminal reductases and redox shuttles, including the fumarate reductase FccA, the small tetraheme cytochrome (STC), the c-type cytochrome MtrA, the nitrate reductase NapA (either through NapB or directly), the nitrite reductase NrfA and probably also the DmsE subunit of dimethyl sulfoxide (DMSO) reductase. Required for growth on fumarate and on DMSO, and for the reduction of iron(III), manganese(IV), nitrite and nitrate. Not essential for growth on trimethylamine-N-oxide (TMAO). The polypeptide is Tetraheme c-type cytochrome CymA (Shewanella oneidensis (strain ATCC 700550 / JCM 31522 / CIP 106686 / LMG 19005 / NCIMB 14063 / MR-1)).